The sequence spans 353 residues: S-adenosylmethionine:tRNA ribosyltransferase-isomerase (353 aa).

The protein belongs to the QueA family. Monomer.

The protein localises to the cytoplasm. It carries out the reaction 7-aminomethyl-7-carbaguanosine(34) in tRNA + S-adenosyl-L-methionine = epoxyqueuosine(34) in tRNA + adenine + L-methionine + 2 H(+). Its pathway is tRNA modification; tRNA-queuosine biosynthesis. Its function is as follows. Transfers and isomerizes the ribose moiety from AdoMet to the 7-aminomethyl group of 7-deazaguanine (preQ1-tRNA) to give epoxyqueuosine (oQ-tRNA). The protein is S-adenosylmethionine:tRNA ribosyltransferase-isomerase of Marinomonas sp. (strain MWYL1).